Here is a 1969-residue protein sequence, read N- to C-terminus: Protein mono-ADP-ribosyltransferase PARP4 (1969 aa).

Residues 1–94 (MTLGIFANCI…RLLDVRNYDP (94 aa)) form the BRCT domain. A Nuclear localization signal motif is present at residues 19 to 25 (PRQQKKK). Positions 92–132 (YDPLSPAPAAPPAERSRSEVQSEYLPSDNTPEKENTEVTEV) are disordered. One can recognise a PARP alpha-helical domain in the interval 235–363 (SEKLQALLLE…ETNLSKPNPP (129 aa)). The PARP catalytic domain maps to 362–566 (PPSLAKYRAL…FCTPGDQIKE (205 aa)). Residues 600–728 (TNIKAGLQDA…KVLIKITYIT (129 aa)) form the VIT domain. One can recognise a VWFA domain in the interval 869–1039 (EVIICLDCSS…KQIEAQMTRI (171 aa)). At Ser-1229 the chain carries Phosphoserine. A Nuclear localization signal motif is present at residues 1230-1242 (DGHGVLQPVSVSS). 5 stretches are compositionally biased toward pro residues: residues 1372–1387 (PPHP…PLPL), 1402–1417 (HPPP…PPPS), 1425–1444 (LPPP…PPIP), 1485–1513 (LPPP…PPPS), and 1521–1540 (LPPP…PPIP). The disordered stretch occupies residues 1372-1608 (PPHPLGGTHP…AGTQFSLSPI (237 aa)). Residues 1443–1541 (IPGGTLIPPS…HIPPPPPIPG (99 aa)) form the FH1 domain. A compositionally biased stretch (low complexity) spans 1541–1556 (GGTLIPSPSSLFGGTH). Pro residues predominate over residues 1557–1585 (LPPPPLLPAGTHIPPPPPITGSTHPPPPS). The tract at residues 1808-1969 (FCDEDQESPV…LHRILYYSQG (162 aa)) is interaction with the major vault protein.

It belongs to the ARTD/PARP family. Component of the vault ribonucleoprotein particle, at least composed of MVP, PARP4 and one or more vault RNAs (vRNAs). Interacts with TEP1.

It localises to the cytoplasm. The protein localises to the nucleus. The enzyme catalyses L-aspartyl-[protein] + NAD(+) = 4-O-(ADP-D-ribosyl)-L-aspartyl-[protein] + nicotinamide. It catalyses the reaction L-glutamyl-[protein] + NAD(+) = 5-O-(ADP-D-ribosyl)-L-glutamyl-[protein] + nicotinamide. Mono-ADP-ribosyltransferase that mediates mono-ADP-ribosylation of target proteins. The chain is Protein mono-ADP-ribosyltransferase PARP4 from Mus musculus (Mouse).